We begin with the raw amino-acid sequence, 140 residues long: Small ribosomal subunit protein bS6 (140 aa).

Residues 96–140 (VTGQSEMLKAEENRSERRERRDRPEHEGADSADSDDSDNSDNADE) are disordered. Residues 103 to 124 (LKAEENRSERRERRDRPEHEGA) show a composition bias toward basic and acidic residues. The segment covering 125 to 140 (DSADSDDSDNSDNADE) has biased composition (acidic residues).

It belongs to the bacterial ribosomal protein bS6 family.

Functionally, binds together with bS18 to 16S ribosomal RNA. This Pseudomonas fluorescens (strain SBW25) protein is Small ribosomal subunit protein bS6.